Reading from the N-terminus, the 578-residue chain is Synaptic defective enhancer 1 (578 aa).

4 disordered regions span residues 1-62, 173-216, 426-457, and 474-578; these read MGEP…RKET, SEQA…SMDQ, PPLP…VSSA, and LGLH…FSNF. Over residues 444–455 the composition is skewed to low complexity; sequence PAAPVPASVPVS. Composition is skewed to pro residues over residues 481–491 and 500–542; these read PPPPPPPPPPT and IPPP…PNPN. Residues 565–578 show a composition bias toward low complexity; that stretch reads NQFPPQQQQSFSNF.

In terms of assembly, may interact (via C-terminus) with ssup-72; the interaction may prevent ssup-72 binding to RNA polymerase II subunit ama-1. Expressed in germline, oocytes, epidermis, pharyngeal bulb and neurons.

The protein localises to the nucleus. Its subcellular location is the nucleus speckle. Acts as a negative regulator of nuclear pre-mRNA 3'-end processing (mRNA polyadenylation). Plays a role in tissue-specific expression of protein isoforms by regulating differential processing of pre-mRNA 3'-end (alternative polyadenylation). In neurons, regulates alternative polyadenylation of specific mRNAs including unc-44 and dlk-1 by interacting with phosphatase ssup-72 and thus preventing ssup-72 dephosphorylation of RNA polymerase II subunit ama-1. Specifically, alters the usage of internal polyadenylation sites (PAS) to promote the production of neuron-specific unc-44 isoform and dlk-1 isoform c, both required for normal synapse and axon development. Conversely, in the epidermis, by inhibiting ssup-72 function, promotes the usage of an internal PAS preventing the production of one of unc-44 isoforms. In neurons, also negatively regulates protein levels of pre-RNA processing protein psf-2. The chain is Synaptic defective enhancer 1 from Caenorhabditis elegans.